Reading from the N-terminus, the 216-residue chain is MNFLLTWIHWGLAALLYLQSAELSKAAPALGDGERKPNEVIKFLEVYERSFCRTIETLVDIFQEYPDEVEYIFRPSCVPLMRCAGCCGDEGLECVPVDVYNVTMEIARIKPHQSQHIAHMSFLQHSKCDCRPKKDVKNKQEKKSKRGKGKGQKRKRKKGRYKPPSFHCEPCSERRKHLFVQDPQTCKCSCKFTDSRCKSRQLELNERTCRCEKPRR.

Positions 1 to 26 are cleaved as a signal peptide; it reads MNFLLTWIHWGLAALLYLQSAELSKA. Intrachain disulfides connect cysteine 52–cysteine 94, cysteine 83–cysteine 128, and cysteine 87–cysteine 130. Asparagine 101 is a glycosylation site (N-linked (GlcNAc...) asparagine). The span at 132 to 141 shows a compositional bias: basic and acidic residues; that stretch reads PKKDVKNKQE. Positions 132–167 are disordered; that stretch reads PKKDVKNKQEKKSKRGKGKGQKRKRKKGRYKPPSFH. Basic residues predominate over residues 142-161; it reads KKSKRGKGKGQKRKRKKGRY.

Belongs to the PDGF/VEGF growth factor family. As to quaternary structure, homodimer; disulfide-linked. Also found as heterodimer with PGF.

In terms of biological role, growth factor active in angiogenesis, vasculogenesis and endothelial cell growth. Induces endothelial cell proliferation, promotes cell migration, inhibits apoptosis and induces permeabilization of blood vessels. Binds to the FLT1/VEGFR1 and KDR/VEGFR2 receptors, heparan sulfate and heparin. The polypeptide is Vascular endothelial growth factor A (VEGFA) (Gallus gallus (Chicken)).